Here is a 211-residue protein sequence, read N- to C-terminus: Uracil phosphoribosyltransferase (211 aa).

5-phospho-alpha-D-ribose 1-diphosphate is bound by residues R78, R103, and D130 to T138. Uracil is bound by residues I195 and G200–A202. 5-phospho-alpha-D-ribose 1-diphosphate is bound at residue D201.

Belongs to the UPRTase family. Mg(2+) is required as a cofactor.

It carries out the reaction UMP + diphosphate = 5-phospho-alpha-D-ribose 1-diphosphate + uracil. Its pathway is pyrimidine metabolism; UMP biosynthesis via salvage pathway; UMP from uracil: step 1/1. Its activity is regulated as follows. Allosterically activated by GTP. Functionally, catalyzes the conversion of uracil and 5-phospho-alpha-D-ribose 1-diphosphate (PRPP) to UMP and diphosphate. The protein is Uracil phosphoribosyltransferase of Renibacterium salmoninarum (strain ATCC 33209 / DSM 20767 / JCM 11484 / NBRC 15589 / NCIMB 2235).